Consider the following 155-residue polypeptide: Small ribosomal subunit protein uS17 (155 aa).

This sequence belongs to the universal ribosomal protein uS17 family. In terms of assembly, component of the small ribosomal subunit. Mature ribosomes consist of a small (40S) and a large (60S) subunit. The 40S subunit contains about 32 different proteins and 1 molecule of RNA (18S). The 60S subunit contains 45 different proteins and 3 molecules of RNA (25S, 5.8S and 5S).

It is found in the cytoplasm. In terms of biological role, component of the ribosome, a large ribonucleoprotein complex responsible for the synthesis of proteins in the cell. The small ribosomal subunit (SSU) binds messenger RNAs (mRNAs) and translates the encoded message by selecting cognate aminoacyl-transfer RNA (tRNA) molecules. The large subunit (LSU) contains the ribosomal catalytic site termed the peptidyl transferase center (PTC), which catalyzes the formation of peptide bonds, thereby polymerizing the amino acids delivered by tRNAs into a polypeptide chain. The nascent polypeptides leave the ribosome through a tunnel in the LSU and interact with protein factors that function in enzymatic processing, targeting, and the membrane insertion of nascent chains at the exit of the ribosomal tunnel. This Candida albicans (strain SC5314 / ATCC MYA-2876) (Yeast) protein is Small ribosomal subunit protein uS17.